The sequence spans 80 residues: Cytochrome c oxidase subunit 7A1, mitochondrial (80 aa).

A mitochondrion-targeting transit peptide spans 1 to 21 (MRALRVSQALVRSFSSTARNR). Residues 22–46 (LENRVAEKQKIFQADNDLPVHLKGG) are Mitochondrial matrix-facing. Residues 47 to 75 (ATDNILYRVTMTLCLGGTVYSLYCLGWAS) form a helical membrane-spanning segment. Residues 76–80 (FPHKK) are Mitochondrial intermembrane-facing.

The protein belongs to the cytochrome c oxidase VIIa family. Component of the complex IV (CIV, cytochrome c oxidase), a multisubunit enzyme composed of 14 subunits. The complex is composed of a catalytic core of 3 subunits MT-CO1, MT-CO2 and MT-CO3, encoded in the mitochondrial DNA, and 11 supernumerary subunits COX4I1 (or COX4I2), COX5A, COX5B, COX6A2 (or COX6A1), COX6B1 (or COX6B2), COX6C, COX7A1 (or COX7A2), COX7B, COX7C, COX8B and NDUFA4, which are encoded in the nuclear genome. The complex exists as a monomer or a dimer and forms supercomplexes (SCs) in the inner mitochondrial membrane with NADH-ubiquinone oxidoreductase (complex I, CI) and ubiquinol-cytochrome c oxidoreductase (cytochrome b-c1 complex, complex III, CIII), resulting in different assemblies (supercomplex SCI(1)III(2)IV(1) and megacomplex MCI(2)III(2)IV(2)).

The protein localises to the mitochondrion inner membrane. It participates in energy metabolism; oxidative phosphorylation. Functionally, component of the mitochondrial respiratory complex IV (CIV, also named cytochrome c oxidase complex), the last enzyme in the mitochondrial electron transport chain which drives oxidative phosphorylation. The CIV complex is the component of the respiratory chain that catalyzes the reduction of oxygen to water. Acts as an assembly factor that specifically drives the homodimerization of CIV complexes, mediating the formation of mitochondrial respiratory supercomplexes (respirasomes) containing two CIV: supercomplxes with two molecules of CIV show improved activity. Despite being highly expressed in brown adipose tissue, not required for thermogenesis. The protein is Cytochrome c oxidase subunit 7A1, mitochondrial (COX7A1) of Sus scrofa (Pig).